Here is a 131-residue protein sequence, read N- to C-terminus: Large ribosomal subunit protein eL32 (131 aa).

It belongs to the eukaryotic ribosomal protein eL32 family. In terms of assembly, component of the large ribosomal subunit (LSU). Mature N.crassa ribosomes consist of a small (40S) and a large (60S) subunit. The 40S small subunit contains 1 molecule of ribosomal RNA (18S rRNA) and at least 32 different proteins. The large 60S subunit contains 3 rRNA molecules (26S, 5.8S and 5S rRNA) and at least 42 different proteins.

The protein resides in the cytoplasm. Its function is as follows. Component of the ribosome, a large ribonucleoprotein complex responsible for the synthesis of proteins in the cell. The small ribosomal subunit (SSU) binds messenger RNAs (mRNAs) and translates the encoded message by selecting cognate aminoacyl-transfer RNA (tRNA) molecules. The large subunit (LSU) contains the ribosomal catalytic site termed the peptidyl transferase center (PTC), which catalyzes the formation of peptide bonds, thereby polymerizing the amino acids delivered by tRNAs into a polypeptide chain. The nascent polypeptides leave the ribosome through a tunnel in the LSU and interact with protein factors that function in enzymatic processing, targeting, and the membrane insertion of nascent chains at the exit of the ribosomal tunnel. This chain is Large ribosomal subunit protein eL32 (crp-63), found in Neurospora crassa (strain ATCC 24698 / 74-OR23-1A / CBS 708.71 / DSM 1257 / FGSC 987).